The sequence spans 227 residues: Cytochrome c oxidase subunit 2 (227 aa).

Over methionine 1 to histidine 26 the chain is Mitochondrial intermembrane. The chain crosses the membrane as a helical span at residues threonine 27–isoleucine 51. Residues asparagine 52–glutamate 62 are Mitochondrial matrix-facing. A helical transmembrane segment spans residues leucine 63–leucine 81. At arginine 82–serine 227 the chain is on the mitochondrial intermembrane side. Residues histidine 161, cysteine 196, glutamate 198, cysteine 200, histidine 204, and methionine 207 each coordinate Cu cation. Residue glutamate 198 participates in Mg(2+) binding.

Belongs to the cytochrome c oxidase subunit 2 family. In terms of assembly, component of the cytochrome c oxidase (complex IV, CIV), a multisubunit enzyme composed of a catalytic core of 3 subunits and several supernumerary subunits. The complex exists as a monomer or a dimer and forms supercomplexes (SCs) in the inner mitochondrial membrane with ubiquinol-cytochrome c oxidoreductase (cytochrome b-c1 complex, complex III, CIII). The cofactor is Cu cation.

It localises to the mitochondrion inner membrane. It catalyses the reaction 4 Fe(II)-[cytochrome c] + O2 + 8 H(+)(in) = 4 Fe(III)-[cytochrome c] + 2 H2O + 4 H(+)(out). In terms of biological role, component of the cytochrome c oxidase, the last enzyme in the mitochondrial electron transport chain which drives oxidative phosphorylation. The respiratory chain contains 3 multisubunit complexes succinate dehydrogenase (complex II, CII), ubiquinol-cytochrome c oxidoreductase (cytochrome b-c1 complex, complex III, CIII) and cytochrome c oxidase (complex IV, CIV), that cooperate to transfer electrons derived from NADH and succinate to molecular oxygen, creating an electrochemical gradient over the inner membrane that drives transmembrane transport and the ATP synthase. Cytochrome c oxidase is the component of the respiratory chain that catalyzes the reduction of oxygen to water. Electrons originating from reduced cytochrome c in the intermembrane space (IMS) are transferred via the dinuclear copper A center (CU(A)) of subunit 2 and heme A of subunit 1 to the active site in subunit 1, a binuclear center (BNC) formed by heme A3 and copper B (CU(B)). The BNC reduces molecular oxygen to 2 water molecules using 4 electrons from cytochrome c in the IMS and 4 protons from the mitochondrial matrix. The polypeptide is Cytochrome c oxidase subunit 2 (COII) (Choristoneura rosaceana (Oblique banded leafroller)).